A 441-amino-acid polypeptide reads, in one-letter code: Glutamyl-tRNA reductase (441 aa).

Residues 47-50 (TCNR), Ser-104, 109-111 (EAQ), and Gln-115 each bind substrate. Residue Cys-48 is the Nucleophile of the active site. 184 to 189 (GAGEMG) is a binding site for NADP(+).

It belongs to the glutamyl-tRNA reductase family. As to quaternary structure, homodimer.

It carries out the reaction (S)-4-amino-5-oxopentanoate + tRNA(Glu) + NADP(+) = L-glutamyl-tRNA(Glu) + NADPH + H(+). It functions in the pathway porphyrin-containing compound metabolism; protoporphyrin-IX biosynthesis; 5-aminolevulinate from L-glutamyl-tRNA(Glu): step 1/2. Functionally, catalyzes the NADPH-dependent reduction of glutamyl-tRNA(Glu) to glutamate 1-semialdehyde (GSA). This Myxococcus xanthus (strain DK1622) protein is Glutamyl-tRNA reductase.